Reading from the N-terminus, the 674-residue chain is Amino-acid acetyltransferase, mitochondrial (674 aa).

Residues 1-50 constitute a mitochondrion transit peptide; sequence MPLVAAMLTRSNGAWKKATSVVQASICRDQQRPNHTTITSVTSVSQRRHF. A compositionally biased stretch (polar residues) spans 33-45; sequence PNHTTITSVTSVS. The interval 33 to 74 is disordered; sequence PNHTTITSVTSVSQRRHFSSAENGAKPSRSHPSAAEAKQKRE. Residues 497-665 enclose the N-acetyltransferase domain; sequence GTPRLKLTDT…YEDVCRGVVP (169 aa).

This sequence belongs to the acetyltransferase family.

The protein localises to the mitochondrion. The enzyme catalyses L-glutamate + acetyl-CoA = N-acetyl-L-glutamate + CoA + H(+). Its pathway is amino-acid biosynthesis; L-arginine biosynthesis; N(2)-acetyl-L-ornithine from L-glutamate: step 1/4. N-acetylglutamate synthase involved in arginine biosynthesis. The polypeptide is Amino-acid acetyltransferase, mitochondrial (ARG2) (Podospora anserina (strain S / ATCC MYA-4624 / DSM 980 / FGSC 10383) (Pleurage anserina)).